The primary structure comprises 33 residues: uncharacterized protein (33 aa).

The interval 1–33 (MQPGTGLSFDISQILKQGSDPKQKLPERQAIVL) is disordered.

This is an uncharacterized protein from Caenorhabditis elegans.